We begin with the raw amino-acid sequence, 1547 residues long: ABC multidrug transporter atrF (1547 aa).

Disordered regions lie at residues 1–66 (MADG…RRGA) and 85–123 (TRSV…IDGD). Residues 10–19 (SATSTTMETN) are compositionally biased toward polar residues. Over residues 36–47 (SSSMTATSSELS) the composition is skewed to low complexity. A compositionally biased stretch (basic and acidic residues) spans 51–66 (RWGERDQGEPVSRRGA). The span at 111-123 (KAIDEEDSTIDGD) shows a compositional bias: acidic residues. One can recognise an ABC transporter 1 domain in the interval 197 to 439 (IPQLRFGKQP…FVNLGFHCPE (243 aa)). N-linked (GlcNAc...) asparagine glycosylation is found at asparagine 299 and asparagine 363. 7 helical membrane-spanning segments follow: residues 552–572 (LYTK…LFYG), 586–606 (ALFF…MPAV), 635–655 (FPAI…MTGL), 657–677 (VTAS…FSIT), 698–718 (GIAL…QGLI), 722–742 (IWFG…AVLT), and 804–824 (FGVV…AAEF). Residues 892-1130 (FTWSNVEYTV…DVIKYFADRG (239 aa)) form the ABC transporter 2 domain. N-linked (GlcNAc...) asparagine glycosylation is present at asparagine 905. 928 to 935 (GASGAGKT) is a binding site for ATP. N-linked (GlcNAc...) asparagine glycosylation is found at asparagine 980 and asparagine 999. The next 8 helical transmembrane spans lie at 1230-1250 (FVSV…GNSI), 1260-1280 (IFLI…KFYI), 1309-1329 (IPMA…PVGF), 1334-1354 (STAG…SSWG), 1356-1376 (WICA…FFFV), 1397-1417 (YWMY…SSIF), 1491-1511 (CFGI…FFIY), and 1520-1540 (FGMG…KGVF).

This sequence belongs to the ABC transporter superfamily. ABCG family. PDR (TC 3.A.1.205) subfamily.

It localises to the cell membrane. It carries out the reaction voriconazole(in) + ATP + H2O = voriconazole(out) + ADP + phosphate + H(+). The enzyme catalyses fluconazole(in) + ATP + H2O = fluconazole(out) + ADP + phosphate + H(+). Functionally, pleiotropic ABC efflux transporter involved in the basal level of azole susceptibility. Confers resistance to fluconazole and voriconazole. This Aspergillus fumigatus (strain ATCC MYA-4609 / CBS 101355 / FGSC A1100 / Af293) (Neosartorya fumigata) protein is ABC multidrug transporter atrF.